A 583-amino-acid polypeptide reads, in one-letter code: Inactive tyrosine-protein kinase RYK (583 aa).

Positions 1–18 are cleaved as a signal peptide; the sequence is MILRYLIFFAQLWALCLA. Over 19–173 the chain is Extracellular; that stretch reads NVNMFISKEE…EVDDTDSIDK (155 aa). The WIF domain occupies 22–147; sequence MFISKEEMNR…KVKLRQEKIC (126 aa). Asn30 and Asn46 each carry an N-linked (GlcNAc...) asparagine glycan. Cysteines 113 and 147 form a disulfide. The helical transmembrane segment at 174 to 194 threads the bilayer; that stretch reads AFFVIICIAAAFLLIVAATLI. Over 195-583 the chain is Cytoplasmic; the sequence is CYFKRSKKED…DFNIQLSQYI (389 aa). The 303-residue stretch at 281-583 folds into the Protein kinase domain; it reads FQSLPLDMEG…DFNIQLSQYI (303 aa). ATP-binding positions include 287–295 and Lys327; that span reads DMEGTFGEV.

The protein belongs to the protein kinase superfamily. Tyr protein kinase family.

It is found in the cell membrane. It localises to the basolateral cell membrane. Functionally, has no detectable kinase activity in vitro and is unlikely to function as a tyrosine kinase in vivo. Receptor which may act as a receptor for Wnt ligand mom-2. Plays a role in controlling P7.p vulva precursor cell lineage orientation during vulva development. Regulates pop-1 asymmetric distribution in P7.p and its daughter cells. Plays a role in the migration of ALM neurons during embryogenesis. The protein is Inactive tyrosine-protein kinase RYK of Caenorhabditis elegans.